We begin with the raw amino-acid sequence, 110 residues long: Putative zinc finger protein ORF110 (110 aa).

Residues 3 to 26 (YVCTACKLKFHTFEEFKIHVHLFH) form a C2H2-type zinc finger.

The protein is Putative zinc finger protein ORF110 of Acidianus filamentous virus 1 (isolate United States/Yellowstone) (AFV-1).